Consider the following 181-residue polypeptide: Oligoribonuclease (181 aa).

The Exonuclease domain occupies 8–171; it reads LIWVDLEMTG…DDIRESIAEL (164 aa). Y129 is an active-site residue.

Belongs to the oligoribonuclease family.

Its subcellular location is the cytoplasm. 3'-to-5' exoribonuclease specific for small oligoribonucleotides. The chain is Oligoribonuclease from Aliivibrio fischeri (strain ATCC 700601 / ES114) (Vibrio fischeri).